Consider the following 468-residue polypeptide: Putative FBD-associated F-box protein At5g22720 (468 aa).

Residues 22 to 68 (EDLISQLPDSLITQILFYLQTKKAVTTSVLSKRWRSLWLSTPGLVLI) form the F-box domain. The 59-residue stretch at 375 to 433 (ELRLSFVPRCLLSSLEFVEIKGCSRSNMERVKYVGEPIETKLARYFVENSTILKKLVLP) folds into the FBD domain.

The sequence is that of Putative FBD-associated F-box protein At5g22720 from Arabidopsis thaliana (Mouse-ear cress).